The following is a 223-amino-acid chain: Transcription factor bHLH75 (223 aa).

Residues 58 to 100 are disordered; that stretch reads FPNLLHGNTRRKGNKEESGSKRRRKRSEEEEAMNGDETQKPKD. In terms of domain architecture, bHLH spans 110-160; it reads QATDSHSLAERVRREKINERLKCLQDLVPGCYKAMGMAVMLDVIIDYVRSL.

As to quaternary structure, homodimer. As to expression, expressed in leaves, stems, and flowers.

The protein localises to the nucleus. The protein is Transcription factor bHLH75 (BHLH75) of Arabidopsis thaliana (Mouse-ear cress).